The sequence spans 329 residues: tRNA dimethylallyltransferase (329 aa).

24–31 (GSTGIGKT) is a binding site for ATP. Position 26 to 31 (26 to 31 (TGIGKT)) interacts with substrate. Residues 49 to 52 (DSMQ) are interaction with substrate tRNA.

This sequence belongs to the IPP transferase family. In terms of assembly, monomer. It depends on Mg(2+) as a cofactor.

It carries out the reaction adenosine(37) in tRNA + dimethylallyl diphosphate = N(6)-dimethylallyladenosine(37) in tRNA + diphosphate. Its function is as follows. Catalyzes the transfer of a dimethylallyl group onto the adenine at position 37 in tRNAs that read codons beginning with uridine, leading to the formation of N6-(dimethylallyl)adenosine (i(6)A). The polypeptide is tRNA dimethylallyltransferase (Methylacidiphilum infernorum (isolate V4) (Methylokorus infernorum (strain V4))).